The sequence spans 446 residues: Histidine--tRNA ligase (446 aa).

This sequence belongs to the class-II aminoacyl-tRNA synthetase family. Homodimer.

The protein localises to the cytoplasm. The catalysed reaction is tRNA(His) + L-histidine + ATP = L-histidyl-tRNA(His) + AMP + diphosphate + H(+). The chain is Histidine--tRNA ligase from Burkholderia vietnamiensis (strain G4 / LMG 22486) (Burkholderia cepacia (strain R1808)).